The following is a 134-amino-acid chain: MGSFFSTMFTPPPAADDGGDSRVVAVHSTATWDEQWGAHKSNPNKLIVIDFSATWCGPCRFIEPAFKDMAGRFADAVFFKIDVDELSEVARQWKVEAMPTFVLIKGGKEVSRVVGAKKDELERKVNMFISSSSS.

A disordered region spans residues 1–20 (MGSFFSTMFTPPPAADDGGD). The Thioredoxin domain maps to 3–130 (SFFSTMFTPP…LERKVNMFIS (128 aa)). Active-site nucleophile residues include cysteine 56 and cysteine 59. A disulfide bridge connects residues cysteine 56 and cysteine 59.

It belongs to the thioredoxin family. Plant H-type subfamily.

The protein resides in the cytoplasm. Probable thiol-disulfide oxidoreductase that may be involved in the redox regulation of a number of cytosolic enzymes. In Oryza sativa subsp. japonica (Rice), this protein is Thioredoxin H2-2.